The chain runs to 201 residues: ATP synthase subunit delta, chloroplastic (201 aa).

This sequence belongs to the ATPase delta chain family. F-type ATPases have 2 components, F(1) - the catalytic core - and F(0) - the membrane proton channel. F(1) has five subunits: alpha(3), beta(3), gamma(1), delta(1), epsilon(1). CF(0) has four main subunits: a(1), b(1), b'(1) and c(10-14). The alpha and beta chains form an alternating ring which encloses part of the gamma chain. F(1) is attached to F(0) by a central stalk formed by the gamma and epsilon chains, while a peripheral stalk is formed by the delta, b and b' chains.

The protein resides in the plastid. It is found in the chloroplast thylakoid membrane. In terms of biological role, f(1)F(0) ATP synthase produces ATP from ADP in the presence of a proton or sodium gradient. F-type ATPases consist of two structural domains, F(1) containing the extramembraneous catalytic core and F(0) containing the membrane proton channel, linked together by a central stalk and a peripheral stalk. During catalysis, ATP synthesis in the catalytic domain of F(1) is coupled via a rotary mechanism of the central stalk subunits to proton translocation. Functionally, this protein is part of the stalk that links CF(0) to CF(1). It either transmits conformational changes from CF(0) to CF(1) or is implicated in proton conduction. This chain is ATP synthase subunit delta, chloroplastic, found in Vaucheria litorea (Yellow-green alga).